The following is a 359-amino-acid chain: CDP-glucose 4,6-dehydratase (359 aa).

The protein belongs to the NAD(P)-dependent epimerase/dehydratase family. It depends on NAD(+) as a cofactor.

It catalyses the reaction CDP-D-glucose = CDP-4-dehydro-6-deoxy-D-glucose + H2O. Its pathway is nucleotide-sugar biosynthesis; CDP-3,6-dideoxy-D-mannose biosynthesis; CDP-3,6-dideoxy-D-mannose from CTP and alpha-D-glucose 1-phosphate: step 2/5. It participates in bacterial outer membrane biogenesis; LPS O-antigen biosynthesis. The sequence is that of CDP-glucose 4,6-dehydratase (rfbG) from Salmonella typhimurium (strain LT2 / SGSC1412 / ATCC 700720).